A 281-amino-acid chain; its full sequence is AB hydrolase superfamily protein YclE (281 aa).

One can recognise an AB hydrolase-1 domain in the interval 30–268 (SAVYYPRLFS…SGHQPMLEEP (239 aa)). Catalysis depends on Ser95, which acts as the Nucleophile. Asp232 is a catalytic residue. Residue His261 is the Proton donor of the active site.

The protein belongs to the AB hydrolase superfamily.

This is AB hydrolase superfamily protein YclE (yclE) from Bacillus subtilis (strain 168).